Reading from the N-terminus, the 631-residue chain is Phosphomethylpyrimidine synthase (631 aa).

Substrate-binding positions include N239, M268, Y297, H333, 353–355 (SRG), 394–397 (DGLR), and E433. Residue H437 coordinates Zn(2+). A substrate-binding site is contributed by Y460. H501 serves as a coordination point for Zn(2+). Residues C581, C584, and C589 each contribute to the [4Fe-4S] cluster site.

It belongs to the ThiC family. In terms of assembly, homodimer. It depends on [4Fe-4S] cluster as a cofactor.

The catalysed reaction is 5-amino-1-(5-phospho-beta-D-ribosyl)imidazole + S-adenosyl-L-methionine = 4-amino-2-methyl-5-(phosphooxymethyl)pyrimidine + CO + 5'-deoxyadenosine + formate + L-methionine + 3 H(+). The protein operates within cofactor biosynthesis; thiamine diphosphate biosynthesis. In terms of biological role, catalyzes the synthesis of the hydroxymethylpyrimidine phosphate (HMP-P) moiety of thiamine from aminoimidazole ribotide (AIR) in a radical S-adenosyl-L-methionine (SAM)-dependent reaction. The protein is Phosphomethylpyrimidine synthase of Salmonella paratyphi C (strain RKS4594).